The chain runs to 78 residues: Large ribosomal subunit protein bL31 (78 aa).

The protein belongs to the bacterial ribosomal protein bL31 family. Type A subfamily. As to quaternary structure, part of the 50S ribosomal subunit.

Functionally, binds the 23S rRNA. The sequence is that of Large ribosomal subunit protein bL31 (rpmE) from Rickettsia typhi (strain ATCC VR-144 / Wilmington).